The sequence spans 314 residues: 4-hydroxy-3-methylbut-2-enyl diphosphate reductase (314 aa).

Cys12 provides a ligand contact to [4Fe-4S] cluster. 2 residues coordinate (2E)-4-hydroxy-3-methylbut-2-enyl diphosphate: His41 and His74. Dimethylallyl diphosphate is bound by residues His41 and His74. The isopentenyl diphosphate site is built by His41 and His74. Cys96 contacts [4Fe-4S] cluster. His124 contributes to the (2E)-4-hydroxy-3-methylbut-2-enyl diphosphate binding site. A dimethylallyl diphosphate-binding site is contributed by His124. His124 lines the isopentenyl diphosphate pocket. The active-site Proton donor is the Glu126. Residue Thr167 coordinates (2E)-4-hydroxy-3-methylbut-2-enyl diphosphate. A [4Fe-4S] cluster-binding site is contributed by Cys197. Ser225, Ser226, Asn227, and Ser269 together coordinate (2E)-4-hydroxy-3-methylbut-2-enyl diphosphate. Residues Ser225, Ser226, Asn227, and Ser269 each coordinate dimethylallyl diphosphate. Residues Ser225, Ser226, Asn227, and Ser269 each coordinate isopentenyl diphosphate.

This sequence belongs to the IspH family. [4Fe-4S] cluster serves as cofactor.

It carries out the reaction isopentenyl diphosphate + 2 oxidized [2Fe-2S]-[ferredoxin] + H2O = (2E)-4-hydroxy-3-methylbut-2-enyl diphosphate + 2 reduced [2Fe-2S]-[ferredoxin] + 2 H(+). The enzyme catalyses dimethylallyl diphosphate + 2 oxidized [2Fe-2S]-[ferredoxin] + H2O = (2E)-4-hydroxy-3-methylbut-2-enyl diphosphate + 2 reduced [2Fe-2S]-[ferredoxin] + 2 H(+). The protein operates within isoprenoid biosynthesis; dimethylallyl diphosphate biosynthesis; dimethylallyl diphosphate from (2E)-4-hydroxy-3-methylbutenyl diphosphate: step 1/1. It functions in the pathway isoprenoid biosynthesis; isopentenyl diphosphate biosynthesis via DXP pathway; isopentenyl diphosphate from 1-deoxy-D-xylulose 5-phosphate: step 6/6. Functionally, catalyzes the conversion of 1-hydroxy-2-methyl-2-(E)-butenyl 4-diphosphate (HMBPP) into a mixture of isopentenyl diphosphate (IPP) and dimethylallyl diphosphate (DMAPP). Acts in the terminal step of the DOXP/MEP pathway for isoprenoid precursor biosynthesis. The chain is 4-hydroxy-3-methylbut-2-enyl diphosphate reductase from Actinobacillus pleuropneumoniae serotype 5b (strain L20).